A 269-amino-acid polypeptide reads, in one-letter code: Ribonuclease HII (269 aa).

One can recognise an RNase H type-2 domain in the interval 83 to 269 (YLIAGVDEVG…HRMSFLTNIL (187 aa)). Positions 89, 90, and 185 each coordinate a divalent metal cation.

This sequence belongs to the RNase HII family. It depends on Mn(2+) as a cofactor. Mg(2+) is required as a cofactor.

The protein localises to the cytoplasm. It catalyses the reaction Endonucleolytic cleavage to 5'-phosphomonoester.. Functionally, endonuclease that specifically degrades the RNA of RNA-DNA hybrids. This Clostridium botulinum (strain Langeland / NCTC 10281 / Type F) protein is Ribonuclease HII.